The following is a 297-amino-acid chain: Ribosomal RNA small subunit methyltransferase H (297 aa).

Residues 37–39, Glu-56, Phe-87, Asp-102, and His-109 each bind S-adenosyl-L-methionine; that span reads GGH.

It belongs to the methyltransferase superfamily. RsmH family.

The protein resides in the cytoplasm. It catalyses the reaction cytidine(1402) in 16S rRNA + S-adenosyl-L-methionine = N(4)-methylcytidine(1402) in 16S rRNA + S-adenosyl-L-homocysteine + H(+). In terms of biological role, specifically methylates the N4 position of cytidine in position 1402 (C1402) of 16S rRNA. This Borrelia hermsii (strain HS1 / DAH) protein is Ribosomal RNA small subunit methyltransferase H.